The sequence spans 209 residues: Large ribosomal subunit protein uL3 (209 aa).

At glutamine 150 the chain carries N5-methylglutamine.

Belongs to the universal ribosomal protein uL3 family. Part of the 50S ribosomal subunit. Forms a cluster with proteins L14 and L19. In terms of processing, methylated by PrmB.

Its function is as follows. One of the primary rRNA binding proteins, it binds directly near the 3'-end of the 23S rRNA, where it nucleates assembly of the 50S subunit. This Aliivibrio fischeri (strain MJ11) (Vibrio fischeri) protein is Large ribosomal subunit protein uL3.